A 249-amino-acid chain; its full sequence is Glucosamine-6-phosphate deaminase (249 aa).

The Proton acceptor; for enolization step role is filled by Asp67. The active-site For ring-opening step is the Asn136. His138 acts as the Proton acceptor; for ring-opening step in catalysis. Glu143 serves as the catalytic For ring-opening step.

Belongs to the glucosamine/galactosamine-6-phosphate isomerase family. NagB subfamily.

The enzyme catalyses alpha-D-glucosamine 6-phosphate + H2O = beta-D-fructose 6-phosphate + NH4(+). It functions in the pathway amino-sugar metabolism; N-acetylneuraminate degradation; D-fructose 6-phosphate from N-acetylneuraminate: step 5/5. In terms of biological role, catalyzes the reversible isomerization-deamination of glucosamine 6-phosphate (GlcN6P) to form fructose 6-phosphate (Fru6P) and ammonium ion. In Clostridioides difficile (strain 630) (Peptoclostridium difficile), this protein is Glucosamine-6-phosphate deaminase.